The following is a 118-amino-acid chain: Large ribosomal subunit protein uL18 (118 aa).

It belongs to the universal ribosomal protein uL18 family. As to quaternary structure, part of the 50S ribosomal subunit; part of the 5S rRNA/L5/L18/L25 subcomplex. Contacts the 5S and 23S rRNAs.

This is one of the proteins that bind and probably mediate the attachment of the 5S RNA into the large ribosomal subunit, where it forms part of the central protuberance. In Dichelobacter nodosus (strain VCS1703A), this protein is Large ribosomal subunit protein uL18.